Consider the following 882-residue polypeptide: Translation initiation factor IF-2 (882 aa).

2 disordered regions span residues 95-176 (PSVT…ASSL) and 229-289 (EHAR…SALQ). Positions 116–133 (TKNTFSQESLNKTSPQKS) are enriched in polar residues. Composition is skewed to basic and acidic residues over residues 137-172 (KAIE…REAE) and 229-246 (EHAR…EGDR). Positions 247-262 (RSRHRGTKTTKQKKTN) are enriched in basic residues. The segment covering 263–276 (KLSESKTDREEARA) has biased composition (basic and acidic residues). Residues 382–551 (HRAPVVTIMG…LLQAEVLELK (170 aa)) form the tr-type G domain. Residues 391–398 (GHVDHGKT) form a G1 region. 391-398 (GHVDHGKT) lines the GTP pocket. A G2 region spans residues 416 to 420 (GITQH). The interval 437–440 (DTPG) is G3. Residues 437-441 (DTPGH) and 491-494 (NKID) each bind GTP. The interval 491–494 (NKID) is G4. The tract at residues 527–529 (SAK) is G5.

Belongs to the TRAFAC class translation factor GTPase superfamily. Classic translation factor GTPase family. IF-2 subfamily.

The protein localises to the cytoplasm. One of the essential components for the initiation of protein synthesis. Protects formylmethionyl-tRNA from spontaneous hydrolysis and promotes its binding to the 30S ribosomal subunits. Also involved in the hydrolysis of GTP during the formation of the 70S ribosomal complex. In Hamiltonella defensa subsp. Acyrthosiphon pisum (strain 5AT), this protein is Translation initiation factor IF-2.